Consider the following 299-residue polypeptide: Formamidopyrimidine-DNA glycosylase (299 aa).

Pro2 acts as the Schiff-base intermediate with DNA in catalysis. Glu3 acts as the Proton donor in catalysis. Residue Lys58 is the Proton donor; for beta-elimination activity of the active site. DNA-binding residues include His106, Arg125, and Lys168. Residues Arg259 to Val295 form an FPG-type zinc finger. Arg285 serves as the catalytic Proton donor; for delta-elimination activity.

It belongs to the FPG family. As to quaternary structure, monomer. Zn(2+) is required as a cofactor.

The enzyme catalyses Hydrolysis of DNA containing ring-opened 7-methylguanine residues, releasing 2,6-diamino-4-hydroxy-5-(N-methyl)formamidopyrimidine.. It carries out the reaction 2'-deoxyribonucleotide-(2'-deoxyribose 5'-phosphate)-2'-deoxyribonucleotide-DNA = a 3'-end 2'-deoxyribonucleotide-(2,3-dehydro-2,3-deoxyribose 5'-phosphate)-DNA + a 5'-end 5'-phospho-2'-deoxyribonucleoside-DNA + H(+). Involved in base excision repair of DNA damaged by oxidation or by mutagenic agents. Acts as a DNA glycosylase that recognizes and removes damaged bases. Has a preference for oxidized purines, such as 7,8-dihydro-8-oxoguanine (8-oxoG). Has AP (apurinic/apyrimidinic) lyase activity and introduces nicks in the DNA strand. Cleaves the DNA backbone by beta-delta elimination to generate a single-strand break at the site of the removed base with both 3'- and 5'-phosphates. The chain is Formamidopyrimidine-DNA glycosylase from Methylorubrum extorquens (strain CM4 / NCIMB 13688) (Methylobacterium extorquens).